The chain runs to 457 residues: Reticulophagy regulator 3 (457 aa).

The disordered stretch occupies residues 1–24 (MAQRVGEEEQGASGLRRRRSGARC). Transmembrane regions (helical) follow at residues 80–100 (FFAL…MIII), 165–185 (PGKF…LGGY), and 186–206 (IPGV…PLAI). Residues 291-305 (ENGTFNLSRGQTPLT) show a composition bias toward polar residues. Disordered regions lie at residues 291–351 (ENGT…IPST) and 410–457 (AYAE…HSHQ). Positions 310 to 326 (DLDRHSDPEESFARDLP) are enriched in basic and acidic residues. The span at 428–441 (LDTDAEADDFELLD) shows a compositional bias: acidic residues. The LIR motif signature appears at 435–440 (DDFELL). Residues 443-457 (SELSQMDPSSSHSHQ) are compositionally biased toward polar residues.

Belongs to the RETREG family. In terms of assembly, interacts with ATG8 family modifier proteins.

The protein resides in the endoplasmic reticulum membrane. In terms of biological role, endoplasmic reticulum (ER)-anchored autophagy regulator which exists in an inactive state under basal conditions but is activated following cellular stress. When activated, induces ER fragmentation and mediates ER delivery into lysosomes through sequestration into autophagosomes via interaction with ATG8 family proteins. Promotes ER membrane curvature and ER tubulation required for subsequent ER fragmentation and engulfment into autophagosomes. The chain is Reticulophagy regulator 3 (retreg3) from Xenopus tropicalis (Western clawed frog).